Reading from the N-terminus, the 319-residue chain is Acetyl-coenzyme A carboxylase carboxyl transferase subunit alpha (319 aa).

The CoA carboxyltransferase C-terminal domain maps to 35–296 (NIDEEVHRLR…KAQLLADLAD (262 aa)).

It belongs to the AccA family. In terms of assembly, acetyl-CoA carboxylase is a heterohexamer composed of biotin carboxyl carrier protein (AccB), biotin carboxylase (AccC) and two subunits each of ACCase subunit alpha (AccA) and ACCase subunit beta (AccD).

It localises to the cytoplasm. The enzyme catalyses N(6)-carboxybiotinyl-L-lysyl-[protein] + acetyl-CoA = N(6)-biotinyl-L-lysyl-[protein] + malonyl-CoA. Its pathway is lipid metabolism; malonyl-CoA biosynthesis; malonyl-CoA from acetyl-CoA: step 1/1. Component of the acetyl coenzyme A carboxylase (ACC) complex. First, biotin carboxylase catalyzes the carboxylation of biotin on its carrier protein (BCCP) and then the CO(2) group is transferred by the carboxyltransferase to acetyl-CoA to form malonyl-CoA. In Shigella boydii serotype 4 (strain Sb227), this protein is Acetyl-coenzyme A carboxylase carboxyl transferase subunit alpha.